Reading from the N-terminus, the 246-residue chain is MADS-box transcription factor 14 (246 aa).

An MADS-box domain is found at 1-61 (MGRGKVQLKR…GKLYKYATDS (61 aa)). Residues 88-178 (QGNWCHEYRK…QKELVEKQKV (91 aa)) form the K-box domain. The tract at residues 180–199 (KQQVQWDQTQPQTSSSSSSF) is disordered.

As to expression, highly expressed in sterile lemmas, at intermediate levels in stamens, and weakly in lemmas, paleas and carpels.

Its subcellular location is the nucleus. Its function is as follows. Probable transcription factor. The sequence is that of MADS-box transcription factor 14 (MADS14) from Oryza sativa subsp. indica (Rice).